Consider the following 408-residue polypeptide: Diguanylate cyclase DgcN (408 aa).

Topologically, residues 1 to 24 are cytoplasmic; that stretch reads MMDNDNSLNKRPTFKRALRNISMT. A helical transmembrane segment spans residues 25 to 45; that stretch reads SIFITMMLIWLLLSVTSVLTL. Residues 46–52 are Periplasmic-facing; sequence KQYAQKN. Residues 53–73 form a helical membrane-spanning segment; sequence LALTAATMTYSLEAAVVFADG. Residues 74 to 112 lie on the Cytoplasmic side of the membrane; the sequence is PAATETLAALGQQGQFSTAEVRDKQQNILASWHYTRKDP. Residues 113–133 form a helical membrane-spanning segment; that stretch reads GDTFSNFISHWLFPAPIIQPI. At 134–154 the chain is on the periplasmic side; it reads RHNGETIGEVRLTARDSSISH. Residues 155 to 175 traverse the membrane as a helical segment; the sequence is FIWFSLAVLTGCILLASGIAI. Residues 176–408 lie on the Cytoplasmic side of the membrane; that stretch reads TLTRHLHNGL…KHQRAEKLVR (233 aa). One can recognise an HAMP domain in the interval 183 to 236; the sequence is NGLVEALKNITDVVHDVRSNRNFSRRVSEERIAEFHRFALDFNSLLDEMEEWQL. Residues 278 to 408 enclose the GGDEF domain; sequence KTSALLFLDG…KHQRAEKLVR (131 aa). Position 286 (Asp286) interacts with Mg(2+). Asn294, His299, and Asp303 together coordinate substrate. Asp329 serves as a coordination point for Mg(2+). Catalysis depends on Asp329, which acts as the Proton acceptor.

Homodimer. Interacts with the cell division proteins FtsZ and ZipA. Requires Mg(2+) as cofactor.

The protein resides in the cell inner membrane. The catalysed reaction is 2 GTP = 3',3'-c-di-GMP + 2 diphosphate. It participates in purine metabolism; 3',5'-cyclic di-GMP biosynthesis. Inhibited by YfiR, which prevents relocation to the midcell. A reductive stress signal is required to inactivate YfiR and turn on the DGC activity of DgcN. In terms of biological role, bifunctional protein that catalyzes the synthesis of cyclic-di-GMP (c-di-GMP) in response to reductive stress and then dynamically relocates to the division site to arrest cell division in response to envelope stress. In the presence of high intracellular c-di-GMP levels, and in response to envelope stress, interacts with cell division proteins and halts cell division, without disassembling the Z ring, but by blocking its further progress toward cytokinesis. Part of a network that regulates cell motility by altering levels of c-di-GMP. This chain is Diguanylate cyclase DgcN, found in Escherichia coli (strain K12).